The primary structure comprises 944 residues: MFAWWGRTVYRYRFIVIGVMVALCLGGGVFGLSLGKHVTQSGFYDDGSQSVQASVLGDQVYGRDRSGHIVAIFQAPAGKTVDDPAWSKKVVDELNRFQQDHPDQVLGWAGYLRASQATGMATADKKYTFVSIPLKGDDDDTILNNYKAIAPDLQRLDGGTVKLAGLQPVAEALTGTIATDQRRMEVLALPLVAVVLFFVFGGVIAAGLPVMVGGLCIAGALGIMRFLAIFGPVHYFAQPVVSLIGLGIAIDYGLFIVSRFREEIAEGYDTETAVRRTVITAGRTVTFSAVLIVASAIGLLLFPQGFLKSLTYATIASVMLSAILSITVLPACLGILGKHVDALGVRTLFRVPFLANWKISAAYLNWLADRLQRTKTREEVEAGFWGKLVNRVMKRPVLFAAPIVIIMILLIIPVGKLSLGGISEKYLPPTNSVRQAQEEFDKLFPGYRTNPLTLVIQTSNHQPVTDAQIADIRSKAMAIGGFIEPDNDPANMWQERAYAVGASKDPSVRVLQNGLINPADASKKLTELRAITPPKGITVLVGGTPALELDSIHGLFAKMPLMVVILLTTTIVLMFLAFGSVVLPIKATLMSALTLGSTMGILTWIFVDGHFSKWLNFTPTPLTAPVIGLIIALVFGLSTDYEVFLVSRMVEARERGMSTQEAIRIGTAATGRIITAAALIVAVVAGAFVFSDLVMMKYLAFGLMAALLLDATVVRMFLVPSVMKLLGDDCWWAPRWARRLQTRIGLGEIHLPDERNRPVSNGRPARPPVTAGLVAARAAGDPRPPHDPTHPLAESPRPARSSPASSPELTPALEATAAPAAPSGASTTRMQIGSSTEPPTTRLAAAGRSVQSPASTPPPTPTPPSAPSAGQTRAMPLAANRSTDAAGDPAEPTAALPIIRSDGDDSEAATEQLNARGTSDKTRQRRRGGGALSAQDLLRREGRL.

The Cytoplasmic segment spans residues 1 to 13 (MFAWWGRTVYRYR). Residues 14 to 34 (FIVIGVMVALCLGGGVFGLSL) form a helical membrane-spanning segment. Residues 35–185 (GKHVTQSGFY…TIATDQRRME (151 aa)) are Periplasmic-facing. An a 1,2-diacylglycero-3-phosphoethanolamine-binding site is contributed by 40-44 (QSGFY). The chain crosses the membrane as a helical span at residues 186–206 (VLALPLVAVVLFFVFGGVIAA). Residues 207-209 (GLP) are Cytoplasmic-facing. The helical transmembrane segment at 210 to 230 (VMVGGLCIAGALGIMRFLAIF) threads the bilayer. The Periplasmic segment spans residues 231 to 235 (GPVHY). The chain crosses the membrane as a helical span at residues 236-256 (FAQPVVSLIGLGIAIDYGLFI). Topologically, residues 257 to 286 (VSRFREEIAEGYDTETAVRRTVITAGRTVT) are cytoplasmic. Residues 287–307 (FSAVLIVASAIGLLLFPQGFL) form a helical membrane-spanning segment. Residues 308 to 314 (KSLTYAT) lie on the Periplasmic side of the membrane. The chain crosses the membrane as a helical span at residues 315 to 335 (IASVMLSAILSITVLPACLGI). Topologically, residues 336–396 (LGKHVDALGV…KLVNRVMKRP (61 aa)) are cytoplasmic. Residues 397–417 (VLFAAPIVIIMILLIIPVGKL) form a helical membrane-spanning segment. Residues 418 to 562 (SLGGISEKYL…HGLFAKMPLM (145 aa)) lie on the Periplasmic side of the membrane. The helical transmembrane segment at 563–583 (VVILLTTTIVLMFLAFGSVVL) threads the bilayer. Residues 584 to 586 (PIK) are Cytoplasmic-facing. The helical transmembrane segment at 587-607 (ATLMSALTLGSTMGILTWIFV) threads the bilayer. The Periplasmic segment spans residues 608–616 (DGHFSKWLN). Residues 617–637 (FTPTPLTAPVIGLIIALVFGL) traverse the membrane as a helical segment. The Cytoplasmic portion of the chain corresponds to 638–672 (STDYEVFLVSRMVEARERGMSTQEAIRIGTAATGR). A helical transmembrane segment spans residues 673 to 693 (IITAAALIVAVVAGAFVFSDL). Over 694–698 (VMMKY) the chain is Periplasmic. Residues 699 to 719 (LAFGLMAALLLDATVVRMFLV) traverse the membrane as a helical segment. The Cytoplasmic segment spans residues 720–944 (PSVMKLLGDD…QDLLRREGRL (225 aa)). Residues 778 to 944 (AAGDPRPPHD…QDLLRREGRL (167 aa)) form a disordered region. Over residues 791 to 828 (PLAESPRPARSSPASSPELTPALEATAAPAAPSGASTT) the composition is skewed to low complexity. Residues 829 to 839 (RMQIGSSTEPP) are compositionally biased toward polar residues. Pro residues predominate over residues 855–866 (STPPPTPTPPSA).

This sequence belongs to the resistance-nodulation-cell division (RND) (TC 2.A.6) family. MmpL subfamily. In terms of assembly, monomer. Interacts with TtfA (via N-terminus); active trehalose monomycolate (TMM) biosynthesis is not required for the complex formation.

The protein resides in the cell inner membrane. Its subcellular location is the cell septum. It is found in the cell tip. Its function is as follows. Transports trehalose monomycolate (TMM) to the cell wall. Flips TMM across the inner membrane. Membrane potential is not required for this function. Transports probably phosphatidylethanolamine (PE) as well. Binds specifically both TMM and PE, but not trehalose dimycolate (TDM). Also binds diacylglycerol (DAG) and other phospholipids, including phosphatidylglycerol (PG), phosphatidylinositol (PI), and cardiolipin (CDL). Contributes to membrane potential, cell wall composition, antibiotic susceptibility and fitness. Could also be part of a heme-iron acquisition system. The chain is Trehalose monomycolate exporter MmpL3 (mmpL3) from Mycobacterium tuberculosis (strain CDC 1551 / Oshkosh).